The primary structure comprises 259 residues: Eukaryotic translation initiation factor 3 subunit G-2 (259 aa).

In terms of domain architecture, RRM spans S179–P257.

The protein belongs to the eIF-3 subunit G family. Component of the eukaryotic translation initiation factor 3 (eIF-3) complex. The eIF-3 complex interacts with pix.

It is found in the cytoplasm. RNA-binding component of the eukaryotic translation initiation factor 3 (eIF-3) complex, which is involved in protein synthesis of a specialized repertoire of mRNAs and, together with other initiation factors, stimulates binding of mRNA and methionyl-tRNAi to the 40S ribosome. The eIF-3 complex specifically targets and initiates translation of a subset of mRNAs involved in cell proliferation. This subunit can bind 18S rRNA. This Drosophila virilis (Fruit fly) protein is Eukaryotic translation initiation factor 3 subunit G-2.